The primary structure comprises 501 residues: Glycerol kinase 1 (501 aa).

Thr16 lines the ADP pocket. Thr16, Thr17, and Ser18 together coordinate ATP. Residue Thr16 coordinates sn-glycerol 3-phosphate. Position 20 (Arg20) interacts with ADP. Residues Arg84, Glu85, Tyr135, and Asp242 each contribute to the sn-glycerol 3-phosphate site. Glycerol is bound by residues Arg84, Glu85, Tyr135, Asp242, and Gln243. 2 residues coordinate ADP: Thr264 and Gly307. Positions 264, 307, 311, and 408 each coordinate ATP. Position 408 (Gly408) interacts with ADP.

The protein belongs to the FGGY kinase family.

It carries out the reaction glycerol + ATP = sn-glycerol 3-phosphate + ADP + H(+). The protein operates within polyol metabolism; glycerol degradation via glycerol kinase pathway; sn-glycerol 3-phosphate from glycerol: step 1/1. Functionally, key enzyme in the regulation of glycerol uptake and metabolism. Catalyzes the phosphorylation of glycerol to yield sn-glycerol 3-phosphate. This Saccharolobus solfataricus (strain ATCC 35092 / DSM 1617 / JCM 11322 / P2) (Sulfolobus solfataricus) protein is Glycerol kinase 1.